We begin with the raw amino-acid sequence, 247 residues long: Cyclin-Q (247 aa).

It belongs to the cyclin family. Cyclin-like FAM58 subfamily.

Functionally, may be an activating cyclin for the cyclin-associated kinase CDK10. This Danio rerio (Zebrafish) protein is Cyclin-Q (ccnq).